Here is a 181-residue protein sequence, read N- to C-terminus: 3-hydroxyacyl-[acyl-carrier-protein] dehydratase FabZ (181 aa).

His-54 is an active-site residue.

The protein belongs to the thioester dehydratase family. FabZ subfamily.

The protein localises to the cytoplasm. It carries out the reaction a (3R)-hydroxyacyl-[ACP] = a (2E)-enoyl-[ACP] + H2O. Its function is as follows. Involved in unsaturated fatty acids biosynthesis. Catalyzes the dehydration of short chain beta-hydroxyacyl-ACPs and long chain saturated and unsaturated beta-hydroxyacyl-ACPs. The protein is 3-hydroxyacyl-[acyl-carrier-protein] dehydratase FabZ of Yersinia pestis.